A 392-amino-acid polypeptide reads, in one-letter code: Probable protein phosphatase 2C 78 (392 aa).

The PPM-type phosphatase domain occupies 39-342; it reads ASGEYSIAVA…DDITVVVVYL (304 aa). Mn(2+) contacts are provided by Asp73, Gly74, Asp274, and Asp333.

It belongs to the PP2C family. The cofactor is Mg(2+). Mn(2+) serves as cofactor.

The enzyme catalyses O-phospho-L-seryl-[protein] + H2O = L-seryl-[protein] + phosphate. It catalyses the reaction O-phospho-L-threonyl-[protein] + H2O = L-threonyl-[protein] + phosphate. The protein is Probable protein phosphatase 2C 78 of Oryza sativa subsp. japonica (Rice).